A 498-amino-acid chain; its full sequence is Glycerol kinase (498 aa).

Threonine 11 lines the ADP pocket. 3 residues coordinate ATP: threonine 11, serine 12, and serine 13. Sn-glycerol 3-phosphate is bound at residue threonine 11. Arginine 15 serves as a coordination point for ADP. Positions 81, 82, 133, and 242 each coordinate sn-glycerol 3-phosphate. Residues arginine 81, glutamate 82, tyrosine 133, aspartate 242, and glutamine 243 each contribute to the glycerol site. Positions 264 and 307 each coordinate ADP. 4 residues coordinate ATP: threonine 264, glycine 307, glutamine 311, and glycine 412. ADP contacts are provided by glycine 412 and asparagine 416.

This sequence belongs to the FGGY kinase family.

The enzyme catalyses glycerol + ATP = sn-glycerol 3-phosphate + ADP + H(+). It functions in the pathway polyol metabolism; glycerol degradation via glycerol kinase pathway; sn-glycerol 3-phosphate from glycerol: step 1/1. Inhibited by fructose 1,6-bisphosphate (FBP). Its function is as follows. Key enzyme in the regulation of glycerol uptake and metabolism. Catalyzes the phosphorylation of glycerol to yield sn-glycerol 3-phosphate. This chain is Glycerol kinase, found in Acidovorax ebreus (strain TPSY) (Diaphorobacter sp. (strain TPSY)).